Reading from the N-terminus, the 552-residue chain is Formate--tetrahydrofolate ligase (552 aa).

63 to 70 (TPFGEGKT) lines the ATP pocket.

It belongs to the formate--tetrahydrofolate ligase family.

It catalyses the reaction (6S)-5,6,7,8-tetrahydrofolate + formate + ATP = (6R)-10-formyltetrahydrofolate + ADP + phosphate. It functions in the pathway one-carbon metabolism; tetrahydrofolate interconversion. This chain is Formate--tetrahydrofolate ligase, found in Caldicellulosiruptor bescii (strain ATCC BAA-1888 / DSM 6725 / KCTC 15123 / Z-1320) (Anaerocellum thermophilum).